Reading from the N-terminus, the 395-residue chain is MQADRSMKMGHVSNPLSTSAPVDATAGPNLIPDLITKIPWPRWILFIAILAAGVLLVSCLLCVICYCCHRQRHRKQPKDKETVGLGSARNSTTTHLVQPDVECLEPCSGGDQPWGQLLLSLEYDFGSQEIRVGLRQAKNLKAEGTADPYARVSVSTQAGRRHETKVHRGTLCPMFEETCCFLVPPAELPKATLKVQLLDFKRFSEHEPLGELQLPLGTVDLQHVLESWYQLGPPGSTESEQMGELCFSLRYVPSSGRLTVVILEARGLNPGLAEAYVKVQLILNQRKWKKNKTSSKKGTTNPYFNEAFVFLVPVSQLQSMDLVLAVWARGLQLLAEPVGKVLLGPRASGQPLQHWADMLAHARRPIAQWHHLRSPREVDRALALQPRLPLLRPRS.

The Extracellular segment spans residues 1 to 44 (MQADRSMKMGHVSNPLSTSAPVDATAGPNLIPDLITKIPWPRWI). A helical; Signal-anchor for type III membrane protein membrane pass occupies residues 45-65 (LFIAILAAGVLLVSCLLCVIC). The Cytoplasmic segment spans residues 66 to 395 (YCCHRQRHRK…PRLPLLRPRS (330 aa)). C2 domains lie at 113–229 (PWGQ…ESWY) and 241–370 (QMGE…AQWH).

Belongs to the synaptotagmin family. Homodimer or homooligomer. Homodimerization and homooligomerization do not depend on Ca(2+). Interacts with SYNCRIP isoform 2 C-terminus. Binds inositol 1,3,4,5-tetrakisphosphate (IP4). Binds to AP2 in a Ca(2+)-independent manner. Interacts with STX1A, STX1B and STX2; the interaction is Ca(2+)-dependent. As to expression, ubiquitous. Strongly expressed in heart, kidney, cerebral cortex, pancreas, and many insulin-secreting cells; lower expression in spleen. Broadly distributed in kidney.

It is found in the cell membrane. The protein localises to the cytoplasmic vesicle. It localises to the secretory vesicle. Its subcellular location is the acrosome. Functionally, involved in the trafficking and exocytosis of secretory vesicles in non-neuronal tissues. Mediates Ca(2+)-regulation of exocytosis acrosomal reaction in sperm. May mediate Ca(2+)-regulation of exocytosis in insulin secreted cells. The chain is Synaptotagmin-8 (Syt8) from Rattus norvegicus (Rat).